Here is a 56-residue protein sequence, read N- to C-terminus: uncharacterized protein (56 aa).

A run of 2 helical transmembrane segments spans residues 5 to 23 and 33 to 55; these read VLIF…YWIY and ITAG…ILGW.

The protein localises to the cell membrane. This is an uncharacterized protein from Archaeoglobus fulgidus (strain ATCC 49558 / DSM 4304 / JCM 9628 / NBRC 100126 / VC-16).